A 734-amino-acid chain; its full sequence is Photosystem I P700 chlorophyll a apoprotein A2 (734 aa).

Transmembrane regions (helical) follow at residues 46 to 69 (IFASHFGHLAVIFLWTSGNLFHVA), 135 to 158 (LYAGSLFLLFLAGVFLFAGWLHLQ), 175 to 199 (LNHHLSGLFGFSSLAWSAHLIHVAI), 273 to 291 (IAHHHLAIGVVFIFAGHMY), 330 to 353 (LHFQLGLALASLGVITSLVAQHMY), 369 to 395 (SALYTHHQYIAGFLMVGAFAHGAIFFV), 417 to 439 (AIISHLSWVSLFLGFHTLGIYVH), and 517 to 535 (FLIHHAIALALHTTTLILV). [4Fe-4S] cluster-binding residues include C559 and C568. The next 2 helical transmembrane spans lie at 575–596 (AFYLSMFWMLNTIGWVTFYWHW) and 643–665 (LSVWSWMFLFGHLIWATGFMFLI). Residues H654, M662, and Y670 each coordinate chlorophyll a. W671 is a phylloquinone binding site. Residues 707–727 (LVGLIHFTAGYIFTYAAFVIA) form a helical membrane-spanning segment.

This sequence belongs to the PsaA/PsaB family. The PsaA/B heterodimer binds the P700 chlorophyll special pair and subsequent electron acceptors. PSI consists of a core antenna complex that captures photons, and an electron transfer chain that converts photonic excitation into a charge separation. The eukaryotic PSI reaction center is composed of at least 11 subunits. It depends on P700 is a chlorophyll a/chlorophyll a' dimer, A0 is one or more chlorophyll a, A1 is one or both phylloquinones and FX is a shared 4Fe-4S iron-sulfur center. as a cofactor.

It is found in the plastid. Its subcellular location is the chloroplast thylakoid membrane. It carries out the reaction reduced [plastocyanin] + hnu + oxidized [2Fe-2S]-[ferredoxin] = oxidized [plastocyanin] + reduced [2Fe-2S]-[ferredoxin]. PsaA and PsaB bind P700, the primary electron donor of photosystem I (PSI), as well as the electron acceptors A0, A1 and FX. PSI is a plastocyanin/cytochrome c6-ferredoxin oxidoreductase, converting photonic excitation into a charge separation, which transfers an electron from the donor P700 chlorophyll pair to the spectroscopically characterized acceptors A0, A1, FX, FA and FB in turn. Oxidized P700 is reduced on the lumenal side of the thylakoid membrane by plastocyanin or cytochrome c6. The sequence is that of Photosystem I P700 chlorophyll a apoprotein A2 from Rhodomonas salina (Cryptomonas salina).